The primary structure comprises 362 residues: G-prodeshotein coupled receptor 4 (362 aa).

Residues 1 to 8 (MGNHTWEG) are Extracellular-facing. N-linked (GlcNAc...) asparagine glycosylation occurs at Asn3. A helical membrane pass occupies residues 9 to 45 (CHVDSRVDHLFPPSLYIFVIGVGLPTNCLALWAAYRQ). Intrachain disulfides connect Cys9/Cys258 and Cys90/Cys168. Residues 46 to 49 (VQQR) are Cytoplasmic-facing. A helical transmembrane segment spans residues 50–80 (NELGVYLMNLSIADLLYICTLPLWVDYFLHH). Residues 81-85 (DNWIH) are Extracellular-facing. A helical membrane pass occupies residues 86 to 121 (GPGSCKLFGFIFYTNIYISIAFLCCISVDRYLAVAH). Topologically, residues 122–129 (PLRFARLR) are cytoplasmic. The helical transmembrane segment at 130–156 (RVKTAVAVSSVVWATELGANSAPLFHD) threads the bilayer. Over 157 to 172 (ELFRDRYNHTFCFEKF) the chain is Extracellular. The segment at 157–172 (ELFRDRYNHTFCFEKF) is extracellular loop 2 (ECL2). Asn164 carries an N-linked (GlcNAc...) asparagine glycan. The helical transmembrane segment at 173–210 (PMEGWVAWMNLYRVFVGFLFPWALMLLSYRGILRAVRG) threads the bilayer. The Cytoplasmic portion of the chain corresponds to 211–214 (SVST). Residues 215–250 (ERQEKAKIKRLALSLIAIVLVCFAPYHVLLLSRSAI) form a helical membrane-spanning segment. The Extracellular segment spans residues 251–260 (YLGRPWDCGF). Residues 261-289 (EERVFSAYHSSLAFTSLNCVADPILYCLV) traverse the membrane as a helical segment. The Cytoplasmic portion of the chain corresponds to 290 to 362 (NEGARSDVAK…VQLKMLPPAQ (73 aa)). Residues 335 to 362 (AKAMTGSWAATPPSQGDQVQLKMLPPAQ) are disordered.

The protein belongs to the G-protein coupled receptor 1 family.

The protein localises to the cell membrane. With respect to regulation, activated by a network of residues that connects an extracellular-facing cavity to Glu-145, a conserved charged residue buried in the transmembrane core of the receptor. Protonation likely drives conformational changes in extracellular loop 2 (ECL2), which stabilizes movement of transmembrane 3 (TM3) and a series of rearrangements that connect the extracellular-facing cavity to Glu-145, a residue only conserved in proton-sensing G-protein coupled receptors. In terms of biological role, proton-sensing G-protein coupled receptor activated by extracellular pH, which is required to monitor pH changes and generate adaptive reactions. Activated by an optimal pH of 6.8-7.2. Ligand binding causes a conformation change that triggers signaling via guanine nucleotide-binding proteins (G proteins) and modulates the activity of downstream effectors, such as adenylate cyclase. GPR4 is mainly coupled to G(s) G proteins and mediates activation of adenylate cyclase activity. May also couple with G(q) and G(12)/G(13) G proteins. Acts as a key regulator of respiratory sensitivity to CO2/H(+) in brain retrotrapezoid nucleus neurons: acts by mediating detection of protons generated by the formation of carbonic acid in the blood, an important mechanism to impulse to breathe. Also acts as a regulator of acid secretion in the kidney collecting duct by maintaining acid-base homeostasis in the kidney. Acidosis-induced GPR4 activation increases paracellular gap formation and permeability of vascular endothelial cells, possibly through the G(12)/G(13)/Rho GTPase signaling pathway. This is G-prodeshotein coupled receptor 4 from Homo sapiens (Human).